Reading from the N-terminus, the 173-residue chain is NADH-ubiquinone oxidoreductase chain 6 (173 aa).

5 helical membrane passes run 1–21, 27–47, 48–68, 87–107, and 139–159; these read MTYF…AVAS, YGVV…LSLG, VSFV…VVFV, VVGY…VGGF, and CGVG…FVVL.

Belongs to the complex I subunit 6 family.

Its subcellular location is the mitochondrion membrane. It carries out the reaction a ubiquinone + NADH + 5 H(+)(in) = a ubiquinol + NAD(+) + 4 H(+)(out). Functionally, core subunit of the mitochondrial membrane respiratory chain NADH dehydrogenase (Complex I) that is believed to belong to the minimal assembly required for catalysis. Complex I functions in the transfer of electrons from NADH to the respiratory chain. The immediate electron acceptor for the enzyme is believed to be ubiquinone. In Aethia pygmaea (Whiskered auklet), this protein is NADH-ubiquinone oxidoreductase chain 6 (MT-ND6).